Reading from the N-terminus, the 467-residue chain is Mothers against decapentaplegic homolog 2 (467 aa).

N-acetylserine is present on S2. Phosphothreonine; by MAPK3 is present on T8. In terms of domain architecture, MH1 spans 10–176 (PVVKRLLGWK…YQRVETPVLP (167 aa)). K19 is subject to N6-acetyllysine. The Zn(2+) site is built by C74, C149, C161, and H166. The segment covering 207–217 (PAGIEPQSNYI) has biased composition (polar residues). The interval 207–251 (PAGIEPQSNYIPETPPPGYISEDGETSDQQLNQSMDTGSPAELSP) is disordered. Position 220 is a phosphothreonine (T220). Positions 221–225 (PPPGY) match the PY-motif motif. Polar residues predominate over residues 233-243 (SDQQLNQSMDT). S240 is modified (phosphoserine; by CAMK2). S245, S250, S255, S458, S460, and S464 each carry phosphoserine. The MH2 domain occupies 274–467 (WCSIAYYELN…SPSVRCSSMS (194 aa)). S465 and S467 each carry phosphoserine; by TGFBR1.

Belongs to the dwarfin/SMAD family. In terms of assembly, monomer; in the absence of TGF-beta. Heterodimer; in the presence of TGF-beta. Forms a heterodimer with co-SMAD, SMAD4, in the nucleus to form the transactivation complex SMAD2/SMAD4. Found in a complex with SMAD3 and TRIM33 upon addition of TGF-beta. Identified in a complex that contains at least ZNF451, SMAD2, SMAD3 and SMAD4. Interacts (via the MH2 domain) with ZFYVE9; may form trimers with the SMAD4 co-SMAD. Interacts with TAZ/WWRT1. Interacts with FOXH1. Interacts with SNW1. Interacts with CREB-binding protein (CBP) and EP300. Interacts with SNON. Interacts with ALK4/ACVR1B. Interacts with SKOR1. Interacts with SKOR2. Interacts with PRDM16. Interacts (via MH2 domain) with LEMD3. Interacts with RBPMS. Interacts with WWP1. Interacts (dephosphorylated form, via the MH1 and MH2 domains) with RANBP3 (via its C-terminal R domain); the interaction results in the export of dephosphorylated SMAD3 out of the nucleus and termination of the TGF-beta signaling. Interacts with PDPK1 (via PH domain). Interacts with DAB2; the interactions are enhanced upon TGF-beta stimulation. Interacts with USP15. Interacts with PPP5C. Interacts with LDLRAD4 (via the SMAD interaction motif). Interacts (via MH2 domain) with PMEPA1 (via the SMAD interaction motif). Interacts with ZFHX3. Interacts with ZNF451. Interacts with SMURF2 when phosphorylated on Ser-465/467. Interacts with PPM1A. Interacts with TGF-beta. Interacts with TGFBR1. Interacts with TGIF. Interacts with SMAD3 and TRIM33. Interacts with ZNF580. Interacts with NEDD4L in response to TGF-beta. Interacts with HGS. Interacts with AIP1. Interacts with WWP1. Interacts with PML. Interacts weakly with ZNF8. Interacts (when phosphorylated) with RNF111; RNF111 acts as an enhancer of the transcriptional responses by mediating ubiquitination and degradation of SMAD2 inhibitors. Interacts with YAP1 (when phosphorylated at 'Ser-127'). Interacts when phosphorylated with IPO7; the interaction facilitates translocation of SMAD2 to the nucleus. Interacts with MTMR4; negatively regulates TGF-beta signaling through SMAD2 dephosphorylation and retention in endosomes. In terms of processing, phosphorylated on one or several of Thr-220, Ser-245, Ser-250, and Ser-255. In response to TGF-beta, phosphorylated on Ser-465/467 by TGF-beta and activin type 1 receptor kinases. TGF-beta-induced Ser-465/467 phosphorylation declines progressively in a KMT5A-dependent manner. Able to interact with SMURF2 when phosphorylated on Ser-465/467, recruiting other proteins, such as SNON, for degradation. In response to decorin, the naturally occurring inhibitor of TGF-beta signaling, phosphorylated on Ser-240 by CaMK2. Phosphorylated by MAPK3 upon EGF stimulation; which increases transcriptional activity and stability, and is blocked by calmodulin. Phosphorylated by PDPK1. Post-translationally, in response to TGF-beta, ubiquitinated by NEDD4L; which promotes its degradation. Monoubiquitinated, leading to prevent DNA-binding. Deubiquitination by USP15 alleviates inhibition and promotes activation of TGF-beta target genes. Ubiquitinated by RNF111, leading to its degradation: only SMAD2 proteins that are 'in use' are targeted by RNF111, RNF111 playing a key role in activating SMAD2 and regulating its turnover. Acetylated on Lys-19 by coactivators in response to TGF-beta signaling, which increases transcriptional activity. Isoform short: Acetylation increases DNA binding activity in vitro and enhances its association with target promoters in vivo. Acetylation in the nucleus by EP300 is enhanced by TGF-beta. In terms of tissue distribution, expressed at high levels in skeletal muscle, endothelial cells, heart and placenta.

The protein localises to the cytoplasm. It localises to the nucleus. In terms of biological role, receptor-regulated SMAD (R-SMAD) that is an intracellular signal transducer and transcriptional modulator activated by TGF-beta (transforming growth factor) and activin type 1 receptor kinases. Binds the TRE element in the promoter region of many genes that are regulated by TGF-beta and, on formation of the SMAD2/SMAD4 complex, activates transcription. Promotes TGFB1-mediated transcription of odontoblastic differentiation genes in dental papilla cells. Positively regulates PDPK1 kinase activity by stimulating its dissociation from the 14-3-3 protein YWHAQ which acts as a negative regulator. May act as a tumor suppressor in colorectal carcinoma. The sequence is that of Mothers against decapentaplegic homolog 2 (SMAD2) from Homo sapiens (Human).